The sequence spans 1022 residues: Histone-lysine N-methyltransferase TRX1 (1022 aa).

Residues 31–151 (SSAPCPLPKK…QRQGVHKEAA (121 aa)) are disordered. Residues 65–78 (EGPPPSPATAPPML) are compositionally biased toward pro residues. Residues 127 to 139 (GGAERRGYFSEPK) show a composition bias toward basic and acidic residues. In terms of domain architecture, PWWP spans 264–327 (PGDLVWAKLT…LKQAVPFLNG (64 aa)). Residues 367–393 (SMEKGSSDANSNKDVHSCDNLSEDKTA) show a composition bias toward basic and acidic residues. Positions 367–399 (SMEKGSSDANSNKDVHSCDNLSEDKTAESGGDY) are disordered. The FYR N-terminal domain occupies 402 to 461 (MTPIELGNLRVSKLGRIVTDSDYFHNKKHIWPEGYTAFRKFRSVKDPHVVILYKMEVLRN). Residues 465-548 (KARPLFRVTS…SCLKYFENAG (84 aa)) enclose the FYR C-terminal domain. The Phorbol-ester/DAG-type zinc finger occupies 553–609 (GYRAVHVNWKDLDYCSVCDMDEEYEDNLFLQCDKCRMMVHARCYGELEPLNGVLWLC). 2 PHD-type zinc fingers span residues 564–615 (LDYC…CRPE) and 677–744 (LLCS…KKHR). Residues 620–744 (SPRCCLCPVT…RLLSYCKKHR (125 aa)) form an extended PHD domain (ePHD) region. One can recognise an SET domain in the interval 861–979 (RRLAFGKSRI…PWEELTYDYR (119 aa)). Zn(2+) is bound at residue Cys-943. Tyr-978 contacts S-adenosyl-L-methionine. The Post-SET domain maps to 985–1001 (QRLPCYCGFPKCRGVVN). 3 residues coordinate Zn(2+): Cys-989, Cys-991, and Cys-996.

This sequence belongs to the class V-like SAM-binding methyltransferase superfamily. Histone-lysine methyltransferase family. TRX/MLL subfamily. As to quaternary structure, interacts with EHD3. In terms of tissue distribution, expressed in leaf blades and panicles.

It localises to the nucleus. The catalysed reaction is L-lysyl(4)-[histone H3] + S-adenosyl-L-methionine = N(6)-methyl-L-lysyl(4)-[histone H3] + S-adenosyl-L-homocysteine + H(+). In terms of biological role, possesses histone H3 methyltransferase activity in vitro. Methylates 'Lys-4' of histone H3. H3 'Lys-4' methylation represents a specific tag for epigenetic transcriptional activation. Functions as a receptor for the lipid messenger phosphatidylinositol 5-phosphate (PI5P), which negatively regulates its transcriptional activation activity. Involved in the regulation of flowering time and floral induction under long day (LD) conditions. Acts as an activator of flowering under LD conditions. May function through binding to EHD3, a repressor of GHD7. The chain is Histone-lysine N-methyltransferase TRX1 from Oryza sativa subsp. japonica (Rice).